The primary structure comprises 385 residues: Succinate--CoA ligase [ADP-forming] subunit beta (385 aa).

The ATP-grasp domain occupies 9 to 240 (KEIFAKYGIP…ETQLPQLEVE (232 aa)). ATP-binding positions include Lys-46, 53-55 (GRG), Glu-98, Thr-101, and Glu-106. Residues Asn-195 and Asp-209 each contribute to the Mg(2+) site. Substrate-binding positions include Asn-260 and 317 to 319 (GIL).

The protein belongs to the succinate/malate CoA ligase beta subunit family. As to quaternary structure, heterotetramer of two alpha and two beta subunits. It depends on Mg(2+) as a cofactor.

It catalyses the reaction succinate + ATP + CoA = succinyl-CoA + ADP + phosphate. The enzyme catalyses GTP + succinate + CoA = succinyl-CoA + GDP + phosphate. The protein operates within carbohydrate metabolism; tricarboxylic acid cycle; succinate from succinyl-CoA (ligase route): step 1/1. In terms of biological role, succinyl-CoA synthetase functions in the citric acid cycle (TCA), coupling the hydrolysis of succinyl-CoA to the synthesis of either ATP or GTP and thus represents the only step of substrate-level phosphorylation in the TCA. The beta subunit provides nucleotide specificity of the enzyme and binds the substrate succinate, while the binding sites for coenzyme A and phosphate are found in the alpha subunit. The sequence is that of Succinate--CoA ligase [ADP-forming] subunit beta from Aquifex aeolicus (strain VF5).